We begin with the raw amino-acid sequence, 622 residues long: Gamma tubulin complex adapter SPC72 (622 aa).

2 disordered regions span residues 1 to 58 (MVRR…PALM) and 221 to 263 (DKEE…IHDS). Polar residues predominate over residues 228-238 (LAQSSPAGSQL). A compositionally biased stretch (basic and acidic residues) spans 239–250 (ESRDSPSSKEEN).

In terms of assembly, homooligomer. Interacts with CDC5, KAR1, KIN4, SPC97, SPC98, STU2 and TUB4. Phosphorylated by CDC5.

It localises to the cytoplasm. Its subcellular location is the cytoskeleton. The protein resides in the microtubule organizing center. It is found in the spindle pole body. Its function is as follows. Spindle pole body (SPB) component that acts as the gamma-tubulin complex-binding protein of the SPB outer plaque. Anchors cytoplasmic microtubules at the half bridge of the spindle pole body (SPB) and accordingly functions in nuclear position and spindle orientation, including anaphase spindle migration into the bud. Recruits KIN4 kinase to both SPBs when cytoplasmic microtubules are defective, to delay mitotic exit. Links cytoplasmic microtubules with spindle orientation checkpoint (SPOC) components and, therefore, could function as part of the sensors of spindle orientation defects. Required for cytoplasmic astral microtubule growth during mitosis. Is strictly required for mating and karyogamy. This is Gamma tubulin complex adapter SPC72 (SPC72) from Saccharomyces cerevisiae (strain ATCC 204508 / S288c) (Baker's yeast).